Consider the following 42-residue polypeptide: F420-non-reducing hydrogenase vhu subunit U (42 aa).

Positions 21 and 24 each coordinate Ni(2+). Residue Sec21 is a non-standard amino acid, selenocysteine. Positions Val28–Asp42 are cleaved as a propeptide — removed in mature form.

The protein belongs to the [NiFe]/[NiFeSe] hydrogenase large subunit family. The F420-non-reducing hydrogenase vhu is composed of four subunits; VhuA, VhuD, VhuG and VhuU. Ni(2+) serves as cofactor.

The polypeptide is F420-non-reducing hydrogenase vhu subunit U (vhuU) (Methanopyrus kandleri (strain AV19 / DSM 6324 / JCM 9639 / NBRC 100938)).